The chain runs to 278 residues: Small ribosomal subunit protein uS2 (278 aa).

The interval 233-257 (IDMEAAGEAPANKGKKKSVKARLDK) is disordered.

Belongs to the universal ribosomal protein uS2 family.

This Bacteroides thetaiotaomicron (strain ATCC 29148 / DSM 2079 / JCM 5827 / CCUG 10774 / NCTC 10582 / VPI-5482 / E50) protein is Small ribosomal subunit protein uS2.